The following is a 556-amino-acid chain: Solute carrier family 22 member 1 (556 aa).

Topologically, residues 1-21 (MPTVDDVLEQVGEFGWFQKQA) are cytoplasmic. A helical membrane pass occupies residues 22–42 (FLLLCLISASLAPIYVGIVFL). At 43-150 (GFTPGHYCQN…LVCGDAWKVD (108 aa)) the chain is on the extracellular side. N-linked (GlcNAc...) asparagine glycosylation occurs at asparagine 71. The helical transmembrane segment at 151 to 171 (LFQSCVNLGFFLGSLVVGYIA) threads the bilayer. The Cytoplasmic segment spans residues 172–177 (DRFGRK). Residues 178–198 (LCLLVTTLVTSVSGVLTAVAP) form a helical membrane-spanning segment. At 199–211 (DYTSMLLFRLLQG) the chain is on the extracellular side. The helical transmembrane segment at 212–231 (MVSKGSWVSGYTLITEFVGS) threads the bilayer. Topologically, residues 232-238 (GYRRTTA) are cytoplasmic. The chain crosses the membrane as a helical span at residues 239-259 (ILYQMAFTVGLVGLAGVAYAI). The Extracellular portion of the chain corresponds to 260 to 263 (PDWR). The chain crosses the membrane as a helical span at residues 264-284 (WLQLAVSLPTFLFLLYYWFVP). The Proline-rich sequence motif lies at 284–288 (PESPR). At 285-348 (ESPRWLLSQK…FRTPNLRKHT (64 aa)) the chain is on the cytoplasmic side. Serine 334 is subject to Phosphoserine. Residues 349–369 (VILMYLWFSCAVLYQGLIMHV) form a helical membrane-spanning segment. At 370 to 377 (GATGANLY) the chain is on the extracellular side. A helical membrane pass occupies residues 378–398 (LDFFYSSLVEFPAAFIILVTI). The Cytoplasmic portion of the chain corresponds to 399–403 (DRIGR). A helical transmembrane segment spans residues 404 to 424 (IYPIAASNLVTGAACLLMIFI). The Extracellular segment spans residues 425–429 (PHELH). Residues 430–452 (WLNVTLACLGRMGATIVLQMVCL) form a helical membrane-spanning segment. The Cytoplasmic portion of the chain corresponds to 453 to 465 (VNAELYPTFIRNL). Residues 466–486 (GMMVCSALCDLGGIFTPFMVF) traverse the membrane as a helical segment. The Extracellular portion of the chain corresponds to 487–493 (RLMEVWQ). A helical transmembrane segment spans residues 494-514 (ALPLILFGVLGLTAGAMTLLL). Over 515-556 (PETKGVALPETIEEAENLGRRKSKAKENTIYLQVQTGKSSST) the chain is Cytoplasmic. Threonine 543 carries the post-translational modification Phosphothreonine.

The protein belongs to the major facilitator (TC 2.A.1) superfamily. Organic cation transporter (TC 2.A.1.19) family. In terms of processing, phosphorylated. As to expression, expressed in kidney cortex in S1, S2 segments of renal proximal tubules as well as in kidney medulla. Expressed throughout the liver lobuli, in hepatocytes surrounding the central veins. Expressed in enterocytes of villi and crypts in small intestine. Expressed in brain, in some white matter regions like the corpus callosum and in the granular layer of the cerebellum. Expressed in Sertoli cells in testis. Expressed in colon. Expressed in tracheal and bronchial ciliated epithelium in the respiratory tract. Expressed in spleen, moderately in skin, and weakly in the gastrointestinal tract, lung, thymus, muscle, and prostate. Expressed in kidney cortex and medulla. Expressed in intestine, liver and colon.

It localises to the basolateral cell membrane. The protein resides in the apical cell membrane. The protein localises to the lateral cell membrane. Its subcellular location is the basal cell membrane. It is found in the cell membrane. The catalysed reaction is 1-methylnicotinamide(out) = 1-methylnicotinamide(in). It carries out the reaction dopamine(out) = dopamine(in). The enzyme catalyses serotonin(out) = serotonin(in). It catalyses the reaction (R)-adrenaline(out) = (R)-adrenaline(in). The catalysed reaction is (R)-noradrenaline(out) = (R)-noradrenaline(in). It carries out the reaction histamine(out) = histamine(in). The enzyme catalyses guanidine(out) = guanidine(in). It catalyses the reaction choline(out) = choline(in). The catalysed reaction is acetylcholine(in) = acetylcholine(out). It carries out the reaction thiamine(in) = thiamine(out). The enzyme catalyses agmatine(out) = agmatine(in). It catalyses the reaction putrescine(out) = putrescine(in). The catalysed reaction is spermidine(in) = spermidine(out). It carries out the reaction (R)-carnitine(in) = (R)-carnitine(out). The enzyme catalyses O-isobutanoyl-(R)-carnitine(in) = O-isobutanoyl-(R)-carnitine(out). It catalyses the reaction O-acetyl-(R)-carnitine(in) = O-acetyl-(R)-carnitine(out). The catalysed reaction is O-3-hydroxybutanoyl-(R)-carnitine(in) = O-3-hydroxybutanoyl-(R)-carnitine(out). It carries out the reaction O-propanoyl-(R)-carnitine(in) = O-propanoyl-(R)-carnitine(out). The enzyme catalyses O-butanoyl-(R)-carnitine(in) = O-butanoyl-(R)-carnitine(out). It catalyses the reaction O-2-methylbutanoyl-(R)-carnitine(in) = O-2-methylbutanoyl-(R)-carnitine(out). The catalysed reaction is O-3-methylbutanoyl-(R)-carnitine(in) = O-3-methylbutanoyl-(R)-carnitine(out). It carries out the reaction O-hexanoyl-(R)-carnitine(in) = O-hexanoyl-(R)-carnitine(out). The enzyme catalyses L-histidyl-L-proline diketopiperazine(in) = L-histidyl-L-proline diketopiperazine(out). It catalyses the reaction (R)-salsolinol(in) = (R)-salsolinol(out). The catalysed reaction is prostaglandin F2alpha(out) = prostaglandin F2alpha(in). It carries out the reaction prostaglandin E2(out) = prostaglandin E2(in). With respect to regulation, phosphorylation of the transporter leads to changes in its substrate affinity, resulting in a regulation of the transport activity. In contrast with human ortholog, ASP uptake is stimulated by protein kinase A (PKA) and C (PKC) and endogenous tyrosine kinase activation. ASP affinity is induced by PKC-dependent phosphorylation. Inhibited by cGMP, most likely through a cGMP-binding protein that interacts with OCT1. In terms of biological role, electrogenic voltage-dependent transporter that mediates the transport of a variety of organic cations such as endogenous bioactive amines, cationic drugs and xenobiotics. Functions as a pH- and Na(+)-independent, bidirectional transporter. Cation cellular uptake or release is driven by the electrochemical potential (i.e. membrane potential and concentration gradient) and substrate selectivity. Hydrophobicity is a major requirement for recognition in polyvalent substrates and inhibitors. Primarily expressed in the basolateral membrane of hepatocytes and proximal tubules and involved in the uptake and disposition of cationic compounds from the blood by hepatic and renal clearance. Most likely functions as an uptake carrier in enterocytes contributing to the intestinal excretion and elimination of organic cations from the systemic circulation. Transports endogenous monoamines such as N-1-methylnicotinamide (NMN), guanidine, neurotransmitters dopamine, serotonin, noradrenaline, adrenaline and histamine, and quaternary ammonium compound such as choline. Also transports natural polyamines such as spermidine, agmatine and putrescine at low affinity, but relatively high turnover. Involved in the hepatic uptake of vitamin B1/thiamine, hence regulating hepatic lipid and energy metabolism. Contributes to the influx and efflux of fatty acid carriers carnitines and acylcarnitines across the basolateral membrane of hepatocytes, from the liver to the systemic circulation and inversely and may be involved in regulating the systemic availability of hepatic acylcarnitines. Mediates the bidirectional transport of acetylcholine (ACh) at the apical membrane of ciliated cell in airway epithelium, thereby playing a role in luminal release of ACh from bronchial epithelium. Transports dopaminergic neuromodulators cyclo(his-pro) and salsolinol with lower efficency. Also capable of transporting non-amine endogenous compounds such as prostaglandin E2 (PGE2) and prostaglandin F2-alpha (PGF2-alpha). May contribute to the transport of cationic compounds in testis across the blood-testis-barrier. Also mediates the uptake of xenobiotics tributylmethylammonium (TBuMA), quinidine, N-methyl-quinine (NMQ), N-methyl-quinidine (NMQD) N-(4,4-azo-n-pentyl)-quinuclidine (APQ), azidoprocainamide methoiodide (AMP), N-(4,4-azo-n-pentyl)-21-deoxyajmalinium (APDA) and 4-(4-(dimethylamino)styryl)-N-methylpyridinium (ASP). Functional isoform capable of transporting TEA. The polypeptide is Solute carrier family 22 member 1 (Rattus norvegicus (Rat)).